The chain runs to 58 residues: PGPCCKDKCECAEGGCKTGCKCTSCRCAPCEKCTSGCKCPSKDECAKTCSKPCSCCXX.

A beta region spans residues 1–28; that stretch reads PGPCCKDKCECAEGGCKTGCKCTSCRCA. A divalent metal cation contacts are provided by Cys4, Cys5, Cys9, Cys11, Cys16, Cys20, Cys22, Cys25, Cys27, Cys30, Cys33, Cys37, Cys39, Cys45, Cys49, Cys53, Cys55, and Cys56. An alpha region spans residues 29-58; it reads PCEKCTSGCKCPSKDECAKTCSKPCSCCXX.

Belongs to the metallothionein superfamily. Type 3 family.

Metallothioneins have a high content of cysteine residues that bind various heavy metals. The different forms of lobster metallothioneins may have different biological functions. Class I MTS in marine crustacea are involved in the sequestration of elevated levels of heavy-metal ions. Binds 6 metal ions. Known to bind cadmium. In Homarus americanus (American lobster), this protein is Metallothionein-1.